We begin with the raw amino-acid sequence, 256 residues long: Imidazole glycerol phosphate synthase subunit HisF (256 aa).

Residues D11 and D130 contribute to the active site.

The protein belongs to the HisA/HisF family. In terms of assembly, heterodimer of HisH and HisF.

It is found in the cytoplasm. It catalyses the reaction 5-[(5-phospho-1-deoxy-D-ribulos-1-ylimino)methylamino]-1-(5-phospho-beta-D-ribosyl)imidazole-4-carboxamide + L-glutamine = D-erythro-1-(imidazol-4-yl)glycerol 3-phosphate + 5-amino-1-(5-phospho-beta-D-ribosyl)imidazole-4-carboxamide + L-glutamate + H(+). Its pathway is amino-acid biosynthesis; L-histidine biosynthesis; L-histidine from 5-phospho-alpha-D-ribose 1-diphosphate: step 5/9. In terms of biological role, IGPS catalyzes the conversion of PRFAR and glutamine to IGP, AICAR and glutamate. The HisF subunit catalyzes the cyclization activity that produces IGP and AICAR from PRFAR using the ammonia provided by the HisH subunit. The sequence is that of Imidazole glycerol phosphate synthase subunit HisF from Cupriavidus pinatubonensis (strain JMP 134 / LMG 1197) (Cupriavidus necator (strain JMP 134)).